The primary structure comprises 230 residues: Ribonuclease 3 (230 aa).

The 116-residue stretch at 19–134 (ELLTIALTHR…LLGAIYLEHG (116 aa)) folds into the RNase III domain. Glutamate 44 is a Mg(2+) binding site. Aspartate 48 is an active-site residue. The Mg(2+) site is built by aspartate 120 and glutamate 123. Residues 161–229 (DWKSSLQELT…AASAYKTLDE (69 aa)) form the DRBM domain.

It belongs to the ribonuclease III family. In terms of assembly, homodimer. Requires Mg(2+) as cofactor.

It localises to the cytoplasm. The catalysed reaction is Endonucleolytic cleavage to 5'-phosphomonoester.. Functionally, digests double-stranded RNA. Involved in the processing of primary rRNA transcript to yield the immediate precursors to the all rRNAs (23S, 16S and 5S). Processes some mRNAs, and tRNAs when they are encoded in the rRNA operon. Processes pre-crRNA and tracrRNA of type II CRISPR loci if present in the organism. The protein is Ribonuclease 3 (rnc) of Mycolicibacterium smegmatis (strain ATCC 700084 / mc(2)155) (Mycobacterium smegmatis).